The following is a 630-amino-acid chain: Pentatricopeptide repeat-containing protein At1g62670, mitochondrial (630 aa).

A mitochondrion-targeting transit peptide spans Met-1 to Arg-22. PPR repeat units follow at residues Thr-44 to Pro-79, Ser-80 to His-114, Asn-115 to Pro-149, Asn-150 to Pro-184, Asn-185 to Pro-219, Asp-220 to Pro-254, Gly-255 to Pro-289, Asn-290 to Pro-324, Asp-325 to Pro-359, Ser-360 to Pro-394, Asp-395 to Gly-429, Asn-430 to Pro-464, Asn-465 to Pro-499, Thr-500 to Pro-534, Asp-535 to Pro-569, and Asn-570 to Gly-604.

The protein belongs to the PPR family. P subfamily.

Its subcellular location is the mitochondrion. The sequence is that of Pentatricopeptide repeat-containing protein At1g62670, mitochondrial from Arabidopsis thaliana (Mouse-ear cress).